We begin with the raw amino-acid sequence, 485 residues long: Protein nucleotidyltransferase YdiU (485 aa).

ATP is bound by residues Gly-90, Gly-92, Arg-93, Lys-113, Asp-125, Gly-126, Arg-176, and Arg-183. The active-site Proton acceptor is the Asp-252. Residues Asn-253 and Asp-262 each coordinate Mg(2+). Asp-262 contributes to the ATP binding site.

The protein belongs to the SELO family. Requires Mg(2+) as cofactor. The cofactor is Mn(2+).

It carries out the reaction L-seryl-[protein] + ATP = 3-O-(5'-adenylyl)-L-seryl-[protein] + diphosphate. The catalysed reaction is L-threonyl-[protein] + ATP = 3-O-(5'-adenylyl)-L-threonyl-[protein] + diphosphate. The enzyme catalyses L-tyrosyl-[protein] + ATP = O-(5'-adenylyl)-L-tyrosyl-[protein] + diphosphate. It catalyses the reaction L-histidyl-[protein] + UTP = N(tele)-(5'-uridylyl)-L-histidyl-[protein] + diphosphate. It carries out the reaction L-seryl-[protein] + UTP = O-(5'-uridylyl)-L-seryl-[protein] + diphosphate. The catalysed reaction is L-tyrosyl-[protein] + UTP = O-(5'-uridylyl)-L-tyrosyl-[protein] + diphosphate. Functionally, nucleotidyltransferase involved in the post-translational modification of proteins. It can catalyze the addition of adenosine monophosphate (AMP) or uridine monophosphate (UMP) to a protein, resulting in modifications known as AMPylation and UMPylation. This is Protein nucleotidyltransferase YdiU from Aliivibrio fischeri (strain MJ11) (Vibrio fischeri).